A 102-amino-acid polypeptide reads, in one-letter code: NADH-quinone oxidoreductase subunit K (102 aa).

The next 3 membrane-spanning stretches (helical) occupy residues 5 to 25, 30 to 50, and 62 to 82; these read LGHYLAVAAMLFTLGILGIFL, IIVILMSVELILLAVNINLVA, and VFALLVLTVAAAEAAIGLAVL.

This sequence belongs to the complex I subunit 4L family. NDH-1 is composed of 14 different subunits. Subunits NuoA, H, J, K, L, M, N constitute the membrane sector of the complex.

The protein localises to the cell inner membrane. The catalysed reaction is a quinone + NADH + 5 H(+)(in) = a quinol + NAD(+) + 4 H(+)(out). NDH-1 shuttles electrons from NADH, via FMN and iron-sulfur (Fe-S) centers, to quinones in the respiratory chain. The immediate electron acceptor for the enzyme in this species is believed to be ubiquinone. Couples the redox reaction to proton translocation (for every two electrons transferred, four hydrogen ions are translocated across the cytoplasmic membrane), and thus conserves the redox energy in a proton gradient. The chain is NADH-quinone oxidoreductase subunit K from Bradyrhizobium sp. (strain BTAi1 / ATCC BAA-1182).